Reading from the N-terminus, the 940-residue chain is Inter-alpha-trypsin inhibitor heavy chain H5 (940 aa).

The signal sequence occupies residues 1–16 (MLLLLGLCLGLSQCVG). One can recognise a VIT domain in the interval 35-161 (VPRQVRLLQR…KAAFFLSYEE (127 aa)). N-linked (GlcNAc...) asparagine glycans are attached at residues Asn97 and Asn127. Disordered regions lie at residues 117–136 (KSGDRVKEKRNKTTEENGEK) and 208–227 (SRQRGSGRGEDDSGPPPSTV). N-linked (GlcNAc...) asparagine glycosylation occurs at Asn231. Residues 295–478 (NVVFVLDSSA…SQLIGFYDEI (184 aa)) form the VWFA domain. The disordered stretch occupies residues 405–432 (DGWEAHGRGDAHPQDPQQHPRGRPRPSL). The segment covering 407–417 (WEAHGRGDAHP) has biased composition (basic and acidic residues). Asn508 carries an N-linked (GlcNAc...) asparagine glycan. The segment at 541–571 (PKTDVPVGPQKAGKDVTGSPRPGGDGERNPN) is disordered. 3 N-linked (GlcNAc...) asparagine glycosylation sites follow: Asn774, Asn793, and Asn860.

The protein belongs to the ITIH family.

The protein resides in the secreted. Its function is as follows. May act as a tumor suppressor. The chain is Inter-alpha-trypsin inhibitor heavy chain H5 (ITIH5) from Pongo abelii (Sumatran orangutan).